The primary structure comprises 488 residues: Bifunctional protein HldE (488 aa).

Residues 1–331 form a ribokinase region; the sequence is MTELSALVER…VALHREDLTL (331 aa). 206–209 is an ATP binding site; that stretch reads NRKE. Asp-276 is an active-site residue. The interval 358–488 is cytidylyltransferase; it reads FTNGCFDLLH…TNTIKKMNGN (131 aa).

In the N-terminal section; belongs to the carbohydrate kinase PfkB family. This sequence in the C-terminal section; belongs to the cytidylyltransferase family. Homodimer.

It catalyses the reaction D-glycero-beta-D-manno-heptose 7-phosphate + ATP = D-glycero-beta-D-manno-heptose 1,7-bisphosphate + ADP + H(+). It carries out the reaction D-glycero-beta-D-manno-heptose 1-phosphate + ATP + H(+) = ADP-D-glycero-beta-D-manno-heptose + diphosphate. The protein operates within nucleotide-sugar biosynthesis; ADP-L-glycero-beta-D-manno-heptose biosynthesis; ADP-L-glycero-beta-D-manno-heptose from D-glycero-beta-D-manno-heptose 7-phosphate: step 1/4. It participates in nucleotide-sugar biosynthesis; ADP-L-glycero-beta-D-manno-heptose biosynthesis; ADP-L-glycero-beta-D-manno-heptose from D-glycero-beta-D-manno-heptose 7-phosphate: step 3/4. In terms of biological role, catalyzes the phosphorylation of D-glycero-D-manno-heptose 7-phosphate at the C-1 position to selectively form D-glycero-beta-D-manno-heptose-1,7-bisphosphate. Catalyzes the ADP transfer from ATP to D-glycero-beta-D-manno-heptose 1-phosphate, yielding ADP-D-glycero-beta-D-manno-heptose. This chain is Bifunctional protein HldE, found in Paramagnetospirillum magneticum (strain ATCC 700264 / AMB-1) (Magnetospirillum magneticum).